Here is an 87-residue protein sequence, read N- to C-terminus: Small ribosomal subunit protein bS18B (87 aa).

It belongs to the bacterial ribosomal protein bS18 family. Part of the 30S ribosomal subunit. Forms a tight heterodimer with protein bS6.

Its function is as follows. Binds as a heterodimer with protein bS6 to the central domain of the 16S rRNA, where it helps stabilize the platform of the 30S subunit. The chain is Small ribosomal subunit protein bS18B from Mycolicibacterium vanbaalenii (strain DSM 7251 / JCM 13017 / BCRC 16820 / KCTC 9966 / NRRL B-24157 / PYR-1) (Mycobacterium vanbaalenii).